Reading from the N-terminus, the 393-residue chain is Ceramide synthase 4 (393 aa).

Residues 1–31 (MWSSLNDWLWNERLWLPANISWAQLEDHDGL) are Lumenal-facing. An N-linked (GlcNAc...) asparagine glycan is attached at Asn19. A helical membrane pass occupies residues 32–52 (VFPHPQDTLMAVPLALALVVV). The tract at residues 67 to 128 (WLGVRNQIRR…RRRRNQDRPC (62 aa)) is homeobox-like. A TLC domain is found at 131-332 (KKFCESSWKF…ILCMIYSFIK (202 aa)). The next 4 membrane-spanning stretches (helical) occupy residues 140–160 (FVFY…ESWL), 179–199 (LYHW…TLPF), 209–229 (QVIH…LNLL), and 260–280 (MCDT…LVLF). A Last loop motif motif is present at residues 291-301 (ESIGNFSPFFG). The chain crosses the membrane as a helical span at residues 304–324 (FLNILLVILQLLHVFWSWLIL). Topologically, residues 325 to 393 (CMIYSFIKKG…RMVNRHTPAT (69 aa)) are cytoplasmic. 3 positions are modified to phosphoserine: Ser342, Ser349, and Ser350. Over residues 346–356 (ELDSSDGEAAE) the composition is skewed to acidic residues. The disordered stretch occupies residues 346–393 (ELDSSDGEAAEECPQMKNGAAQRPGAAPTDGPRSRAAGRMVNRHTPAT).

Post-translationally, phosphorylated at the C-terminus by CK2.

The protein resides in the endoplasmic reticulum membrane. It carries out the reaction sphinganine + octadecanoyl-CoA = N-(octadecanoyl)-sphinganine + CoA + H(+). It catalyses the reaction eicosanoyl-CoA + sphinganine = N-eicosanoylsphinganine + CoA + H(+). The catalysed reaction is docosanoyl-CoA + sphinganine = N-docosanoylsphinganine + CoA + H(+). The enzyme catalyses tetracosanoyl-CoA + sphinganine = N-tetracosanoylsphinganine + CoA + H(+). It carries out the reaction hexacosanoyl-CoA + sphinganine = N-hexacosanoylsphinganine + CoA + H(+). It catalyses the reaction a fatty acyl-CoA + sphing-4-enine = an N-acylsphing-4-enine + CoA + H(+). The catalysed reaction is sphing-4-enine + octadecanoyl-CoA = N-octadecanoylsphing-4-enine + CoA + H(+). The enzyme catalyses hexadecasphinganine + octadecanoyl-CoA = N-octadecanoylhexadecasphinganine + CoA + H(+). It participates in lipid metabolism; sphingolipid metabolism. Its function is as follows. Ceramide synthase that catalyzes formation of ceramide from sphinganine and acyl-CoA substrates, with high selectivity toward long and very-long chains (C18:0-C22:0) as acyl donor. The protein is Ceramide synthase 4 of Bos taurus (Bovine).